The primary structure comprises 342 residues: Ferredoxin--NADP reductase (342 aa).

Cysteine 17, aspartate 36, glutamine 44, tyrosine 49, isoleucine 89, phenylalanine 124, aspartate 289, and threonine 330 together coordinate FAD.

This sequence belongs to the ferredoxin--NADP reductase type 2 family. As to quaternary structure, homodimer. FAD serves as cofactor.

It catalyses the reaction 2 reduced [2Fe-2S]-[ferredoxin] + NADP(+) + H(+) = 2 oxidized [2Fe-2S]-[ferredoxin] + NADPH. The sequence is that of Ferredoxin--NADP reductase from Rhodopseudomonas palustris (strain BisB18).